The following is a 447-amino-acid chain: GTPase Der (447 aa).

EngA-type G domains follow at residues 3–167 (PVIA…VQER) and 181–354 (VKIA…AAAM). Residues 9–16 (GRPNVGKS), 56–60 (DTGGF), 119–122 (NKAE), 187–194 (GRPNVGKS), 234–238 (DTAGL), and 299–302 (NKWD) each bind GTP. Residues 355 to 439 (IKLPTPQITR…PLRIEFRTNK (85 aa)) form the KH-like domain.

The protein belongs to the TRAFAC class TrmE-Era-EngA-EngB-Septin-like GTPase superfamily. EngA (Der) GTPase family. In terms of assembly, associates with the 50S ribosomal subunit.

In terms of biological role, GTPase that plays an essential role in the late steps of ribosome biogenesis. The protein is GTPase Der of Cupriavidus metallidurans (strain ATCC 43123 / DSM 2839 / NBRC 102507 / CH34) (Ralstonia metallidurans).